The sequence spans 148 residues: uncharacterized protein (148 aa).

Positions 37-94 are enriched in low complexity; it reads NNNNYNNNNKNNNNNNNNNNNNNNNNNNNNNNNYINSCNSNNNNNNNNNNTKNNNINS. Positions 37–99 are disordered; that stretch reads NNNNYNNNNK…NNINSRTDKN (63 aa).

This is an uncharacterized protein from Dictyostelium discoideum (Social amoeba).